A 352-amino-acid chain; its full sequence is Histidine biosynthesis bifunctional protein HisB (352 aa).

The interval 1 to 163 is histidinol-phosphatase; that stretch reads MKKILFIDRD…MVASAIINDA (163 aa). D8 (nucleophile) is an active-site residue. Residues D8 and D10 each contribute to the Mg(2+) site. D10 (proton donor) is an active-site residue. Residues C91, H93, C99, and C101 each contribute to the Zn(2+) site. D128 is a binding site for Mg(2+). The interval 164 to 352 is imidazoleglycerol-phosphate dehydratase; the sequence is RKASVQRKTK…NYLPSTKGVL (189 aa).

It in the N-terminal section; belongs to the histidinol-phosphatase family. The protein in the C-terminal section; belongs to the imidazoleglycerol-phosphate dehydratase family. The cofactor is Mg(2+). It depends on Zn(2+) as a cofactor.

It is found in the cytoplasm. The catalysed reaction is D-erythro-1-(imidazol-4-yl)glycerol 3-phosphate = 3-(imidazol-4-yl)-2-oxopropyl phosphate + H2O. The enzyme catalyses L-histidinol phosphate + H2O = L-histidinol + phosphate. The protein operates within amino-acid biosynthesis; L-histidine biosynthesis; L-histidine from 5-phospho-alpha-D-ribose 1-diphosphate: step 6/9. Its pathway is amino-acid biosynthesis; L-histidine biosynthesis; L-histidine from 5-phospho-alpha-D-ribose 1-diphosphate: step 8/9. The polypeptide is Histidine biosynthesis bifunctional protein HisB (Legionella pneumophila subsp. pneumophila (strain Philadelphia 1 / ATCC 33152 / DSM 7513)).